A 147-amino-acid polypeptide reads, in one-letter code: Large ribosomal subunit protein uL15 (147 aa).

The tract at residues methionine 1 to lysine 45 is disordered. A compositionally biased stretch (basic residues) spans threonine 30 to glycine 44.

The protein belongs to the universal ribosomal protein uL15 family. Part of the 50S ribosomal subunit.

In terms of biological role, binds to the 23S rRNA. This is Large ribosomal subunit protein uL15 from Thermotoga sp. (strain RQ2).